A 289-amino-acid chain; its full sequence is Pre-mRNA-splicing factor cwf23 (289 aa).

The J domain occupies 9–74 (DYYELLGINE…QLRKAYDSER (66 aa)). Residues 129-148 (ESANLRRQRENRLREEQEQS) are compositionally biased toward basic and acidic residues. Disordered stretches follow at residues 129–161 (ESAN…SKIS) and 269–289 (KQKH…TMNA).

This sequence belongs to the DnaJ family. In terms of assembly, belongs to the 40S cdc5-associated complex (or cwf complex), a spliceosome sub-complex reminiscent of a late-stage spliceosome composed of the U2, U5 and U6 snRNAs and at least brr2, cdc5, cwf2/prp3, cwf3/syf1, cwf4/syf3, cwf5/ecm2, spp42/cwf6, cwf7/spf27, cwf8, cwf9, cwf10, cwf11, cwf12, prp45/cwf13, cwf14, cwf15, cwf16, cwf17, cwf18, cwf19, cwf20, cwf21, cwf22, cwf23, cwf24, cwf25, cwf26, cyp7/cwf27, cwf28, cwf29/ist3, lea1, msl1, prp5/cwf1, prp10, prp12/sap130, prp17, prp22, sap61, sap62, sap114, sap145, slu7, smb1, smd1, smd3, smf1, smg1 and syf2.

It is found in the cytoplasm. It localises to the nucleus. In terms of biological role, involved in pre-mRNA splicing. May be involved in endoplasmic reticulum-associated protein degradation (ERAD) and required for growth at low and high temperatures. This chain is Pre-mRNA-splicing factor cwf23 (cwf23), found in Schizosaccharomyces pombe (strain 972 / ATCC 24843) (Fission yeast).